Here is a 312-residue protein sequence, read N- to C-terminus: Glyoxylate/hydroxypyruvate reductase A (312 aa).

Arg-227 is an active-site residue. His-275 serves as the catalytic Proton donor.

Belongs to the D-isomer specific 2-hydroxyacid dehydrogenase family. GhrA subfamily.

Its subcellular location is the cytoplasm. The enzyme catalyses glycolate + NADP(+) = glyoxylate + NADPH + H(+). It catalyses the reaction (R)-glycerate + NAD(+) = 3-hydroxypyruvate + NADH + H(+). It carries out the reaction (R)-glycerate + NADP(+) = 3-hydroxypyruvate + NADPH + H(+). In terms of biological role, catalyzes the NADPH-dependent reduction of glyoxylate and hydroxypyruvate into glycolate and glycerate, respectively. The polypeptide is Glyoxylate/hydroxypyruvate reductase A (Salmonella paratyphi C (strain RKS4594)).